A 1553-amino-acid chain; its full sequence is Sterol 3-beta-glucosyltransferase (1553 aa).

Composition is skewed to polar residues over residues 1–10 (MASSQPTSSG) and 25–36 (LNTETSSSQHRA). 2 disordered regions span residues 1–106 (MASS…NEED) and 189–270 (PASA…GLAP). Residues 90-100 (LPDRLKDNGKE) are compositionally biased toward basic and acidic residues. A compositionally biased stretch (low complexity) spans 211 to 222 (LLQSVPSLSRLS). The span at 223–232 (SSHKSKKTKQ) shows a compositional bias: basic residues. 2 GRAM domains span residues 323-370 (KKLK…HLPK) and 464-495 (SLQR…EEAQ). A PH domain is found at 374-470 (EIAKSGYLSK…WVKSLQRVIF (97 aa)). Disordered regions lie at residues 542-569 (SPED…GSPR), 611-662 (FSRR…FDDP), and 805-825 (GKKH…VEDD). The span at 633–650 (LHGDGRRSFSKPRHEPHA) shows a compositional bias: basic and acidic residues. The segment covering 651–662 (STDSYAQSFDDP) has biased composition (polar residues). Residues 810-819 (DHPAGRRTER) are compositionally biased toward basic and acidic residues. The GRAM 3 domain occupies 834–900 (ARFQAHFALP…KDIETVDKEK (67 aa)). UDP-alpha-D-glucose contacts are provided by S1020, R1021, D1023, A1328, H1330, H1343, S1346, G1347, T1348, D1367, and Q1368. Disordered stretches follow at residues 1446–1504 (KHQS…GSMS) and 1527–1553 (PALG…VKYV). The segment covering 1466–1488 (PEDDQGQAAEEDDIDADDEEEES) has biased composition (acidic residues).

This sequence belongs to the glycosyltransferase 28 family.

It localises to the cytoplasm. The protein localises to the preautophagosomal structure membrane. The catalysed reaction is a sterol + UDP-alpha-D-glucose = a sterol 3-beta-D-glucoside + UDP + H(+). It catalyses the reaction ergosterol + UDP-alpha-D-glucose = ergosteryl 3-beta-D-glucoside + UDP + H(+). Functionally, sterol glycosyltransferase responsible for the glycosylation of ergosterol to form ergosterol-glucoside. In Neurospora crassa (strain ATCC 24698 / 74-OR23-1A / CBS 708.71 / DSM 1257 / FGSC 987), this protein is Sterol 3-beta-glucosyltransferase (apg-12).